We begin with the raw amino-acid sequence, 162 residues long: Selenoprotein F (162 aa).

The first 28 residues, 1–28 (MAAEPGGWLGPALGLRLLLATALQMVSA), serve as a signal peptide directing secretion. Residue U93 is a non-standard amino acid, selenocysteine.

It belongs to the selenoprotein M/F family. As to quaternary structure, forms a tight complex with UGGT1/UGCGL1. Interacts with UGGT2/UGCGL2. Interacts with RDH11.

The protein resides in the endoplasmic reticulum lumen. Functionally, may be involved in redox reactions associated with the formation of disulfide bonds. May contribute to the quality control of protein folding in the endoplasmic reticulum. May regulate protein folding by enhancing the catalytic activity of UGGT1/UGCGL1 and UGGT2/UGCGL2. In Sus scrofa (Pig), this protein is Selenoprotein F.